We begin with the raw amino-acid sequence, 325 residues long: Lipoyl synthase (325 aa).

Positions 1-31 (MASDSDLLDTKPAETRHPEKAHRPDQPTLRK) are disordered. Positions 8 to 31 (LDTKPAETRHPEKAHRPDQPTLRK) are enriched in basic and acidic residues. Cys-61, Cys-66, Cys-72, Cys-87, Cys-91, Cys-94, and Ser-300 together coordinate [4Fe-4S] cluster. One can recognise a Radical SAM core domain in the interval 73–289 (WAKKHATFMI…AEIGRAKGFL (217 aa)).

It belongs to the radical SAM superfamily. Lipoyl synthase family. Requires [4Fe-4S] cluster as cofactor.

The protein localises to the cytoplasm. It carries out the reaction [[Fe-S] cluster scaffold protein carrying a second [4Fe-4S](2+) cluster] + N(6)-octanoyl-L-lysyl-[protein] + 2 oxidized [2Fe-2S]-[ferredoxin] + 2 S-adenosyl-L-methionine + 4 H(+) = [[Fe-S] cluster scaffold protein] + N(6)-[(R)-dihydrolipoyl]-L-lysyl-[protein] + 4 Fe(3+) + 2 hydrogen sulfide + 2 5'-deoxyadenosine + 2 L-methionine + 2 reduced [2Fe-2S]-[ferredoxin]. The protein operates within protein modification; protein lipoylation via endogenous pathway; protein N(6)-(lipoyl)lysine from octanoyl-[acyl-carrier-protein]: step 2/2. Its function is as follows. Catalyzes the radical-mediated insertion of two sulfur atoms into the C-6 and C-8 positions of the octanoyl moiety bound to the lipoyl domains of lipoate-dependent enzymes, thereby converting the octanoylated domains into lipoylated derivatives. This chain is Lipoyl synthase, found in Methylocella silvestris (strain DSM 15510 / CIP 108128 / LMG 27833 / NCIMB 13906 / BL2).